The chain runs to 321 residues: Acyl-CoA 5-desaturase AL21 (321 aa).

Helical transmembrane passes span 42–62 (IFHIILVGGLHVLCLSAPFTF) and 64–84 (WSAFWLSLTLYAVCGVFGTTL). Fe cation contacts are provided by histidine 87, histidine 92, histidine 124, histidine 127, and histidine 128. A Histidine box-1 motif is present at residues 87 to 92 (HRNLTH). Residues 124-128 (HRYHH) carry the Histidine box-2 motif. Residues 190–210 (LQAALLYMFGGFPFIVWGMAV) form a helical membrane-spanning segment. Residues histidine 227, histidine 256, histidine 259, and histidine 260 each contribute to the Fe cation site. Residues 256–260 (HNNHH) carry the Histidine box-3 motif.

The protein belongs to the fatty acid desaturase type 1 family. Requires Fe(2+) as cofactor.

The protein localises to the membrane. It catalyses the reaction (11Z,14Z)-eicosadienoyl-CoA + AH2 + O2 = (5Z,11Z,14Z)-eicosatrienoyl-CoA + A + 2 H2O. The enzyme catalyses (11Z,14Z,17Z)-eicosatrienoyl-CoA + AH2 + O2 = (5Z,11Z,14Z,17Z)-eicosatetraenoyl-CoA + A + 2 H2O. Its pathway is lipid metabolism; polyunsaturated fatty acid biosynthesis. In terms of biological role, catalyzes the desaturation of 20:2Delta(11,14) and 20:3Delta(11,14,17) to generate sciadonic acid (20:3Delta(5,11,14)) and juniperonic acid (20:4Delta(5,11,14,17)). The enzyme can also use 16:0 and 18:0 as substrates. The polypeptide is Acyl-CoA 5-desaturase AL21 (Anemone leveillei (Windflower)).